The following is a 421-amino-acid chain: Synaptotagmin-12 (421 aa).

Residues methionine 1–glycine 18 are Vesicular-facing. Residues tryptophan 19–leucine 39 traverse the membrane as a helical segment. Topologically, residues tryptophan 40 to asparagine 421 are cytoplasmic. 3 positions are modified to phosphoserine: serine 97, serine 99, and serine 214. 2 consecutive C2 domains span residues threonine 152 to leucine 272 and alanine 283 to histidine 416.

It belongs to the synaptotagmin family. In terms of assembly, homodimer. Can also form heterodimers. Interacts with SYT1. Post-translationally, phosphorylation of Ser-97 is required for mossy-fiber long-term potentiation.

It localises to the cytoplasmic vesicle. The protein resides in the secretory vesicle. The protein localises to the synaptic vesicle membrane. In terms of biological role, synaptic vesicle phosphoprotein that enhances spontaneous neurotransmitter release but does not effect induced neurotransmitter release. Unlike other synaptotagmins, it does not bind Ca(2+) or phospholipids. Essential for mossy-fiber long-term potentiation in the hippocampus. The polypeptide is Synaptotagmin-12 (SYT12) (Homo sapiens (Human)).